Reading from the N-terminus, the 156-residue chain is Ribosomal RNA large subunit methyltransferase H (156 aa).

S-adenosyl-L-methionine contacts are provided by residues L73, G104, and 123 to 128 (LSPLTL).

The protein belongs to the RNA methyltransferase RlmH family. In terms of assembly, homodimer.

Its subcellular location is the cytoplasm. The catalysed reaction is pseudouridine(1915) in 23S rRNA + S-adenosyl-L-methionine = N(3)-methylpseudouridine(1915) in 23S rRNA + S-adenosyl-L-homocysteine + H(+). Specifically methylates the pseudouridine at position 1915 (m3Psi1915) in 23S rRNA. This chain is Ribosomal RNA large subunit methyltransferase H, found in Aliivibrio salmonicida (strain LFI1238) (Vibrio salmonicida (strain LFI1238)).